The following is a 520-amino-acid chain: Succinyl-CoA:3-ketoacid coenzyme A transferase 2A, mitochondrial (520 aa).

A mitochondrion-targeting transit peptide spans 1–39; that stretch reads MAALRLLAWAFSRRVSAHRPQPTLPHHLIRHYPTTRCGK. The tract at residues 280–299 is disordered; that stretch reads ERLTTRDSPPAPGSKDQDPK. Glutamate 342 acts as the 5-glutamyl coenzyme A thioester intermediate in catalysis.

This sequence belongs to the 3-oxoacid CoA-transferase family. As to quaternary structure, homodimer. As to expression, expressed in flagella of epididymal sperm.

It is found in the mitochondrion. The catalysed reaction is a 3-oxo acid + succinyl-CoA = a 3-oxoacyl-CoA + succinate. It functions in the pathway ketone metabolism; succinyl-CoA degradation; acetoacetyl-CoA from succinyl-CoA: step 1/1. Functionally, key enzyme for ketone body catabolism. Transfers the CoA moiety from succinate to acetoacetate. Formation of the enzyme-CoA intermediate proceeds via an unstable anhydride species formed between the carboxylate groups of the enzyme and substrate. Probably play and important roles in the energy metabolism of spermatozoa. This Rattus norvegicus (Rat) protein is Succinyl-CoA:3-ketoacid coenzyme A transferase 2A, mitochondrial (Oxct2a).